We begin with the raw amino-acid sequence, 320 residues long: o-succinylbenzoate synthase (320 aa).

The Proton donor role is filled by Lys133. Asp161, Glu190, and Asp213 together coordinate Mg(2+). Lys235 acts as the Proton acceptor in catalysis.

Belongs to the mandelate racemase/muconate lactonizing enzyme family. MenC type 1 subfamily. The cofactor is a divalent metal cation.

The enzyme catalyses (1R,6R)-6-hydroxy-2-succinyl-cyclohexa-2,4-diene-1-carboxylate = 2-succinylbenzoate + H2O. It participates in quinol/quinone metabolism; 1,4-dihydroxy-2-naphthoate biosynthesis; 1,4-dihydroxy-2-naphthoate from chorismate: step 4/7. The protein operates within quinol/quinone metabolism; menaquinone biosynthesis. Functionally, converts 2-succinyl-6-hydroxy-2,4-cyclohexadiene-1-carboxylate (SHCHC) to 2-succinylbenzoate (OSB). In Escherichia coli O6:H1 (strain CFT073 / ATCC 700928 / UPEC), this protein is o-succinylbenzoate synthase.